The following is a 367-amino-acid chain: 2-aminoethylphosphonate--pyruvate transaminase (367 aa).

Lys-193 carries the N6-(pyridoxal phosphate)lysine modification.

This sequence belongs to the class-V pyridoxal-phosphate-dependent aminotransferase family. PhnW subfamily. As to quaternary structure, homodimer. The cofactor is pyridoxal 5'-phosphate.

The catalysed reaction is (2-aminoethyl)phosphonate + pyruvate = phosphonoacetaldehyde + L-alanine. In terms of biological role, involved in phosphonate degradation. The polypeptide is 2-aminoethylphosphonate--pyruvate transaminase (Vibrio parahaemolyticus serotype O3:K6 (strain RIMD 2210633)).